The chain runs to 603 residues: Leucine-rich repeat-containing protein 40 (603 aa).

The disordered stretch occupies residues 1-27; that stretch reads MAAARRARAGDPRAGFRRAAEEQSPAV. LRR repeat units follow at residues 83-104, 106-127, 129-150, 152-173, 175-196, 198-219, 221-242, 244-265, 266-286, 290-311, 313-335, 336-357, 401-422, 427-449, 451-473, 474-495, 497-518, 520-541, 544-565, and 567-588; these read DLTK…VRLL, ALTV…LGQL, NLQK…LLQL, HLKG…FGQL, SLEE…FALL, NLVR…ISAM, SLRQ…LASM, SLEQ…PSCK, LLKE…ENLK, SLSV…ITLL, KLER…GNLS, QLKF…LLQK, TLKL…VFSA, PVTS…VELK, SVCD…CTLH, KLTH…MEAL, RLQV…LYRM, ALET…QLKK, QLGT…LGNC, and TLRT…ILAK.

The sequence is that of Leucine-rich repeat-containing protein 40 (LRRC40) from Gallus gallus (Chicken).